Consider the following 205-residue polypeptide: MGNCFRRLSLFGQPTQAKYEMLCSSDDLETEELTFFLDMTYKDFGVYQNDIISHQKDTETMKTLLGLLPMYKKTKLRHTVMERCLSNCPNHVKDALCVELMKAEKILQTMDVVFMKTLIGEFSMCTENLNQLLNKFATDQSTLSDVEKINSLIEIDGENSKRLLVELDPILHEETGLYQALPNVVTEAPSEKVKSIRVESEGESV.

The S-palmitoyl cysteine; by host moiety is linked to residue Cys4.

It belongs to the herpesviridae UL51 family. In terms of assembly, oligomerizes. Interacts with U75; this interaction mediates U75 incorporation to virions. In terms of processing, phosphorylated. Palmitoylation is necessary for Golgi localization.

It is found in the virion tegument. The protein resides in the host cytoplasm. The protein localises to the host Golgi apparatus. Plays several roles during the time course of infection, including egress of virus particles from the perinuclear space and secondary envelopment of cytoplasmic capsids that bud into specific trans-Golgi network (TGN)-derived membranes. The protein is Tegument protein UL51 homolog (U44) of Homo sapiens (Human).